The chain runs to 199 residues: NADH-quinone oxidoreductase subunit B 2 (199 aa).

[4Fe-4S] cluster-binding residues include Cys78, Cys79, Cys143, and Cys173.

Belongs to the complex I 20 kDa subunit family. In terms of assembly, NDH-1 is composed of 14 different subunits. Subunits NuoB, C, D, E, F, and G constitute the peripheral sector of the complex. It depends on [4Fe-4S] cluster as a cofactor.

Its subcellular location is the cell inner membrane. It carries out the reaction a quinone + NADH + 5 H(+)(in) = a quinol + NAD(+) + 4 H(+)(out). In terms of biological role, NDH-1 shuttles electrons from NADH, via FMN and iron-sulfur (Fe-S) centers, to quinones in the respiratory chain. The immediate electron acceptor for the enzyme in this species is believed to be ubiquinone. Couples the redox reaction to proton translocation (for every two electrons transferred, four hydrogen ions are translocated across the cytoplasmic membrane), and thus conserves the redox energy in a proton gradient. This chain is NADH-quinone oxidoreductase subunit B 2, found in Rhodopseudomonas palustris (strain BisB5).